A 908-amino-acid polypeptide reads, in one-letter code: DNA polymerase I (908 aa).

The region spanning 1 to 318 (MKELYLIDAL…DDINTIDTEN (318 aa)) is the 5'-3' exonuclease domain. Residues 319 to 531 (VKYRSITTKI…MEENGIYLDK (213 aa)) form the 3'-5' exonuclease domain. Residues 532–908 (EYLKEYGKEL…ETGKSWGEIH (377 aa)) are polymerase.

This sequence belongs to the DNA polymerase type-A family.

It carries out the reaction DNA(n) + a 2'-deoxyribonucleoside 5'-triphosphate = DNA(n+1) + diphosphate. Its function is as follows. In addition to polymerase activity, this DNA polymerase exhibits 3'-5' and 5'-3' exonuclease activity. The polypeptide is DNA polymerase I (polA) (Borreliella burgdorferi (strain ATCC 35210 / DSM 4680 / CIP 102532 / B31) (Borrelia burgdorferi)).